The sequence spans 579 residues: MAAAAAALASSPMVHLTASRLRLPRPARSPAAATPSPSPASAACCSRGAACGLEWRPKSGLRALRRCEDRLRCFSIDGGGGGGGGGGGGTGGEDGEKRGEEEAAAAAEAKVGGAVEEMRSERTRSGSFSSSSSSSSGTPGISNEPPFLSFSVDNIDTVKLLELLGPEKVDSADVKAIKEKLFGYTTFWLTREEPFGDLGEGVLFIGNLRGKREEIFAKLQQQLRELTGDKYNLFMVEEPNSEGEDPRGGPRVSFGLLRREVSEPGPTTLWQYVISLLLFLLTVFSCVELGIASKISSLPPEIVTYFTDPNATGPPPDMQLLLPFVESALPVAYGVLAIQLFHEVGHFLAAFPKKVKLSIPFFIPNFTLGTFGAITQFKSILPDKKTMFDISMAGPLAGAALSFSMFSVGLLLSSNPAGASDLVEVPSKLFQGSLLLGLVSRATLGYRAMHAATVAIHPLVIAGWCGLTTTAFNMLPVGCLDGGRALQGAFGKDALFGFGLTTYSLLGLGVLGGPLSLPWGLYVLICQRTPEKPCLNDVSDVGTWRRAALIVSVFLVVLTLIPLWDELAEDLGVGLVTSF.

2 disordered regions span residues 1 to 42 (MAAA…PASA) and 78 to 146 (GGGG…NEPP). The N-terminal 44 residues, 1–44 (MAAAAAALASSPMVHLTASRLRLPRPARSPAAATPSPSPASAAC), are a transit peptide targeting the chloroplast. A compositionally biased stretch (low complexity) spans 16–42 (LTASRLRLPRPARSPAAATPSPSPASA). Positions 78–92 (GGGGGGGGGGGGTGG) are enriched in gly residues. 2 stretches are compositionally biased toward low complexity: residues 104 to 115 (AAAAEAKVGGAV) and 125 to 137 (SGSF…SSSG). 8 consecutive transmembrane segments (helical) span residues 272 to 292 (YVIS…LGIA), 321 to 341 (LLPF…IQLF), 357 to 377 (LSIP…ITQF), 392 to 412 (MAGP…GLLL), 419 to 439 (ASDL…LGLV), 452 to 472 (ATVA…TTAF), 505 to 525 (LLGL…YVLI), and 547 to 567 (AALI…WDEL).

Belongs to the peptidase M50B family.

Its subcellular location is the plastid. The protein resides in the chloroplast membrane. Its function is as follows. Probable membrane-associated metalloprotease that may be involved in chloroplast development. The sequence is that of Probable zinc metalloprotease EGY1, chloroplastic (EGY1) from Oryza sativa subsp. japonica (Rice).